The primary structure comprises 230 residues: Cytidylate kinase (230 aa).

10 to 18 serves as a coordination point for ATP; that stretch reads GPAGSGKST.

The protein belongs to the cytidylate kinase family. Type 1 subfamily.

It is found in the cytoplasm. It catalyses the reaction CMP + ATP = CDP + ADP. It carries out the reaction dCMP + ATP = dCDP + ADP. In Leptospira borgpetersenii serovar Hardjo-bovis (strain JB197), this protein is Cytidylate kinase.